Here is a 295-residue protein sequence, read N- to C-terminus: WHI2-like protein P4H10.16c (295 aa).

The protein belongs to the WHI2 family.

The protein localises to the cytoplasm. It is found in the nucleus. This Schizosaccharomyces pombe (strain 972 / ATCC 24843) (Fission yeast) protein is WHI2-like protein P4H10.16c.